We begin with the raw amino-acid sequence, 239 residues long: Uridylate kinase (239 aa).

ATP is bound at residue 10 to 13; it reads KFSG. The tract at residues 18–23 is involved in allosteric activation by GTP; that stretch reads GENGFG. A UMP-binding site is contributed by Gly52. Residues Gly53 and Arg57 each coordinate ATP. UMP contacts are provided by residues Asp73 and 134–141; that span reads TGNPYFTT. ATP is bound by residues Thr161, Tyr167, and Asp170.

Belongs to the UMP kinase family. As to quaternary structure, homohexamer.

It localises to the cytoplasm. The catalysed reaction is UMP + ATP = UDP + ADP. It participates in pyrimidine metabolism; CTP biosynthesis via de novo pathway; UDP from UMP (UMPK route): step 1/1. Allosterically activated by GTP. Inhibited by UTP. Its function is as follows. Catalyzes the reversible phosphorylation of UMP to UDP. The chain is Uridylate kinase from Campylobacter jejuni subsp. doylei (strain ATCC BAA-1458 / RM4099 / 269.97).